The following is a 209-amino-acid chain: Protease (209 aa).

Residues histidine 55, aspartate 72, and cysteine 123 contribute to the active site.

The protein belongs to the peptidase C5 family. As to quaternary structure, interacts with protease cofactor pVI-C; this interaction is necessary for protease activation.

Its subcellular location is the virion. It is found in the host nucleus. It catalyses the reaction Cleaves proteins of the adenovirus and its host cell at two consensus sites: -Yaa-Xaa-Gly-Gly-|-Xaa- and -Yaa-Xaa-Gly-Xaa-|-Gly- (in which Yaa is Met, Ile or Leu, and Xaa is any amino acid).. Its activity is regulated as follows. Requires DNA and protease cofactor for maximal activation. Inside nascent virions, becomes partially activated by binding to the viral DNA, allowing it to cleave the cofactor that binds to the protease and fully activates it. Actin, like the viral protease cofactor, seems to act as a cofactor in the cleavage of cytokeratin 18 and of actin itself. Functionally, cleaves viral precursor proteins (pTP, pIIIa, pVI, pVII, pVIII, and pX) inside newly assembled particles giving rise to mature virions. Protease complexed to its cofactor slides along the viral DNA to specifically locate and cleave the viral precursors. Mature virions have a weakened organization compared to the unmature virions, thereby facilitating subsequent uncoating. Without maturation, the particle lacks infectivity and is unable to uncoat. Late in adenovirus infection, in the cytoplasm, may participate in the cytoskeleton destruction. Cleaves host cell cytoskeletal keratins K7 and K18. The chain is Protease from Human adenovirus D serotype 17 (HAdV-17).